The sequence spans 533 residues: Calcium-dependent protein kinase 12 (533 aa).

The tract at residues 1 to 77 (MGNCFTKTYE…RASGGGGEMG (77 aa)) is disordered. Gly2 carries the N-myristoyl glycine lipid modification. Positions 26 to 38 (ERSKARGGDEPGT) are enriched in basic and acidic residues. Positions 57–69 (GSSSAAGALSRRA) are enriched in low complexity. The region spanning 91 to 349 (YQLDRKLGSG…ASQALEHRWL (259 aa)) is the Protein kinase domain. ATP-binding positions include 97-105 (LGSGQFGTT) and Lys120. Catalysis depends on Asp215, which acts as the Proton acceptor. An autoinhibitory domain region spans residues 354–384 (ASDRPIDSAVLSRMKQFKAMNKLKQLALKVI). 4 EF-hand domains span residues 391–426 (EEIK…LGSR), 427–462 (ISEA…KHKL), 463–498 (EKEE…YGMG), and 499–533 (DEAN…GIQT). Ca(2+)-binding residues include Asp404, Asp406, Ser408, Thr410, Glu415, Asp440, Asp442, Ser444, Ser446, Glu451, Asp476, Asp478, Ser480, Tyr482, Glu487, Asp511, Asp513, Asp515, Arg517, and Glu522.

Belongs to the protein kinase superfamily. Ser/Thr protein kinase family. CDPK subfamily. Expressed in roots, leaf blades and developing seeds. Expressed in vascular tissues of roots and leaf blades. Expressed in the phloem tissue of the large vascular bundle in leaf blades.

It localises to the membrane. It carries out the reaction L-seryl-[protein] + ATP = O-phospho-L-seryl-[protein] + ADP + H(+). The enzyme catalyses L-threonyl-[protein] + ATP = O-phospho-L-threonyl-[protein] + ADP + H(+). Its activity is regulated as follows. Activated by calcium. Autophosphorylation may play an important role in the regulation of the kinase activity. Its function is as follows. May play a role in signal transduction pathways that involve calcium as a second messenger. Functions in signal transduction pathways that positively regulate responses to low-nitrogen. Functions in multiple signaling pathways, positively regulating salt tolerance and negatively modulating rice blast fungus resistance. May promote tolerance to salt stress by negatively regulating NADPH oxidase and positively regulating reactive oxygen species (ROS) scavengers. The protein is Calcium-dependent protein kinase 12 of Oryza sativa subsp. japonica (Rice).